Reading from the N-terminus, the 188-residue chain is dCTP deaminase (188 aa).

DCTP contacts are provided by residues 111-116, 135-137, Gln-156, Tyr-170, and Gln-180; these read KSTYAR and TLE. The Proton donor/acceptor role is filled by Glu-137.

Belongs to the dCTP deaminase family. As to quaternary structure, homotrimer.

The catalysed reaction is dCTP + H2O + H(+) = dUTP + NH4(+). It participates in pyrimidine metabolism; dUMP biosynthesis; dUMP from dCTP (dUTP route): step 1/2. Functionally, catalyzes the deamination of dCTP to dUTP. This chain is dCTP deaminase, found in Thiobacillus denitrificans (strain ATCC 25259 / T1).